Consider the following 185-residue polypeptide: uncharacterized protein (185 aa).

Residues 1 to 18 (MLLKLILILCFLVTLSLS) form the signal peptide. A disordered region spans residues 30-185 (TQGPTIASGG…VQDCGEITGW (156 aa)). The segment covering 86–101 (RAQEGGKKDTTKEQPK) has biased composition (basic and acidic residues). Over residues 103–116 (NNNNKNLGRHSSSG) the composition is skewed to low complexity. Residues 117–135 (SGSGSGSGCGVTGDTGTGS) show a composition bias toward gly residues.

It localises to the secreted. This is an uncharacterized protein from Dictyostelium discoideum (Social amoeba).